The following is a 330-amino-acid chain: Olfactory receptor 5P70 (330 aa).

Over 1 to 28 the chain is Extracellular; the sequence is MAFLEDGNHTIVTEFILLGLTDDPVLRD. N-linked (GlcNAc...) asparagine glycosylation is present at asparagine 8. A helical membrane pass occupies residues 29–49; that stretch reads ILFTIILCIYLVTVSGNLSTI. Topologically, residues 50 to 57 are cytoplasmic; the sequence is LLIRVSSQ. Residues 58 to 78 form a helical membrane-spanning segment; sequence LHHPMYFFLSHLASVDIGISS. Topologically, residues 79 to 102 are extracellular; the sequence is SVTPNMLANFLVKPNTISYIGCSI. Cysteine 100 and cysteine 192 form a disulfide bridge. The helical transmembrane segment at 103–123 threads the bilayer; that stretch reads QFTSAVFLATVECFLLAAMAY. At 124 to 136 the chain is on the cytoplasmic side; the sequence is DRFVAICNPLLYS. A helical membrane pass occupies residues 137 to 157; that stretch reads TKMSREACIQLVVGSYIQGLL. Topologically, residues 158 to 199 are extracellular; it reads NASFFTLSFFSLIFCGPNRINHFYCDLAPLVELSCSDVTLAV. The helical transmembrane segment at 200 to 220 threads the bilayer; that stretch reads VITSISAGFITLTTVFVIAIS. The Cytoplasmic segment spans residues 221-240; it reads YSCIFITIMKMHSTESRYKA. Residues 241 to 261 traverse the membrane as a helical segment; the sequence is FSTCTSHLTAVTLFYGTTMFI. The Extracellular portion of the chain corresponds to 262–274; it reads YVMPKSSYSTDQN. The chain crosses the membrane as a helical span at residues 275 to 295; that stretch reads KVLSVFYMVVIPMLNPLIYSL. Residues 296 to 330 lie on the Cytoplasmic side of the membrane; the sequence is RNNEIKGALKRYLGKKIFSYGNLFCKTHYNDTHQV.

This sequence belongs to the G-protein coupled receptor 1 family.

The protein resides in the cell membrane. In terms of biological role, potential odorant receptor. The polypeptide is Olfactory receptor 5P70 (Mus musculus (Mouse)).